Consider the following 710-residue polypeptide: DNA ligase (710 aa).

NAD(+) contacts are provided by residues Asp-53–Asp-57, Ser-102–Leu-103, and Glu-136. Lys-138 (N6-AMP-lysine intermediate) is an active-site residue. The NAD(+) site is built by Arg-159, Glu-196, Lys-312, and Lys-336. Positions 429, 432, 453, and 459 each coordinate Zn(2+). A BRCT domain is found at Glu-633 to Gly-710.

This sequence belongs to the NAD-dependent DNA ligase family. LigA subfamily. It depends on Mg(2+) as a cofactor. Mn(2+) is required as a cofactor.

It catalyses the reaction NAD(+) + (deoxyribonucleotide)n-3'-hydroxyl + 5'-phospho-(deoxyribonucleotide)m = (deoxyribonucleotide)n+m + AMP + beta-nicotinamide D-nucleotide.. Its function is as follows. DNA ligase that catalyzes the formation of phosphodiester linkages between 5'-phosphoryl and 3'-hydroxyl groups in double-stranded DNA using NAD as a coenzyme and as the energy source for the reaction. It is essential for DNA replication and repair of damaged DNA. This chain is DNA ligase, found in Parvibaculum lavamentivorans (strain DS-1 / DSM 13023 / NCIMB 13966).